The sequence spans 428 residues: Enolase (428 aa).

(2R)-2-phosphoglycerate is bound at residue Gln162. The Proton donor role is filled by Glu204. 3 residues coordinate Mg(2+): Asp241, Glu282, and Asp309. Lys334, Arg363, Ser364, and Lys385 together coordinate (2R)-2-phosphoglycerate. The active-site Proton acceptor is Lys334.

This sequence belongs to the enolase family. Mg(2+) serves as cofactor.

It is found in the cytoplasm. It localises to the secreted. The protein localises to the cell surface. It carries out the reaction (2R)-2-phosphoglycerate = phosphoenolpyruvate + H2O. It participates in carbohydrate degradation; glycolysis; pyruvate from D-glyceraldehyde 3-phosphate: step 4/5. Catalyzes the reversible conversion of 2-phosphoglycerate (2-PG) into phosphoenolpyruvate (PEP). It is essential for the degradation of carbohydrates via glycolysis. The chain is Enolase from Mycobacterium ulcerans (strain Agy99).